Here is a 177-residue protein sequence, read N- to C-terminus: Isopentenyl-diphosphate Delta-isomerase (177 aa).

Mn(2+)-binding residues include H22 and H28. The region spanning 26-160 is the Nudix hydrolase domain; the sequence is LRHMAISVFV…PERFTPWLRI (135 aa). C62 is a catalytic residue. H64 contacts Mn(2+). E82 is a Mg(2+) binding site. Mn(2+)-binding residues include E108 and E110. E110 is an active-site residue.

This sequence belongs to the IPP isomerase type 1 family. The cofactor is Mg(2+). Mn(2+) serves as cofactor.

The protein resides in the cytoplasm. The catalysed reaction is isopentenyl diphosphate = dimethylallyl diphosphate. Its pathway is isoprenoid biosynthesis; dimethylallyl diphosphate biosynthesis; dimethylallyl diphosphate from isopentenyl diphosphate: step 1/1. It participates in porphyrin-containing compound metabolism; chlorophyll biosynthesis. In terms of biological role, catalyzes the 1,3-allylic rearrangement of the homoallylic substrate isopentenyl (IPP) to its highly electrophilic allylic isomer, dimethylallyl diphosphate (DMAPP). The polypeptide is Isopentenyl-diphosphate Delta-isomerase (Cereibacter sphaeroides (strain KD131 / KCTC 12085) (Rhodobacter sphaeroides)).